Here is a 332-residue protein sequence, read N- to C-terminus: DNA-directed RNA polymerase subunit alpha (332 aa).

The alpha N-terminal domain (alpha-NTD) stretch occupies residues 1–231 (MQTNLLKPKT…EQLAVFAQLD (231 aa)). The tract at residues 252 to 332 (FDPILLRPVD…NWPPAGLEKR (81 aa)) is alpha C-terminal domain (alpha-CTD).

This sequence belongs to the RNA polymerase alpha chain family. As to quaternary structure, homodimer. The RNAP catalytic core consists of 2 alpha, 1 beta, 1 beta' and 1 omega subunit. When a sigma factor is associated with the core the holoenzyme is formed, which can initiate transcription.

It carries out the reaction RNA(n) + a ribonucleoside 5'-triphosphate = RNA(n+1) + diphosphate. Functionally, DNA-dependent RNA polymerase catalyzes the transcription of DNA into RNA using the four ribonucleoside triphosphates as substrates. This is DNA-directed RNA polymerase subunit alpha from Delftia acidovorans (strain DSM 14801 / SPH-1).